Reading from the N-terminus, the 415-residue chain is Elongation factor Tu, chloroplastic (415 aa).

A tr-type G domain is found at 13–217 (KIHLNVGTIG…HLDLYLPTPR (205 aa)). Residues 22–29 (GHFSHGKT) form a G1 region. 22–29 (GHFSHGKT) contacts GTP. T29 provides a ligand contact to Mg(2+). A G2 region spans residues 63–67 (NMSIY). The G3 stretch occupies residues 84-87 (DCPG). Residues 84-88 (DCPGH) and 139-142 (NKED) contribute to the GTP site. The tract at residues 139-142 (NKED) is G4. The tract at residues 177 to 179 (SAL) is G5.

This sequence belongs to the TRAFAC class translation factor GTPase superfamily. Classic translation factor GTPase family. EF-Tu/EF-1A subfamily.

It is found in the plastid. The protein localises to the chloroplast. It catalyses the reaction GTP + H2O = GDP + phosphate + H(+). Its function is as follows. GTP hydrolase that promotes the GTP-dependent binding of aminoacyl-tRNA to the A-site of ribosomes during protein biosynthesis. In Coleochaete orbicularis (Charophycean green alga), this protein is Elongation factor Tu, chloroplastic (tufA).